Reading from the N-terminus, the 418-residue chain is Tryptophan synthase beta chain (418 aa).

Polar residues predominate over residues 1–17 (MTSTLPNASTPDPSSLQ). The disordered stretch occupies residues 1 to 23 (MTSTLPNASTPDPSSLQPAVRPG). Lys111 carries the N6-(pyridoxal phosphate)lysine modification.

It belongs to the TrpB family. In terms of assembly, tetramer of two alpha and two beta chains. Requires pyridoxal 5'-phosphate as cofactor.

The enzyme catalyses (1S,2R)-1-C-(indol-3-yl)glycerol 3-phosphate + L-serine = D-glyceraldehyde 3-phosphate + L-tryptophan + H2O. Its pathway is amino-acid biosynthesis; L-tryptophan biosynthesis; L-tryptophan from chorismate: step 5/5. The beta subunit is responsible for the synthesis of L-tryptophan from indole and L-serine. The chain is Tryptophan synthase beta chain from Synechococcus sp. (strain CC9605).